Reading from the N-terminus, the 205-residue chain is Ribonuclease HII (205 aa).

Residues 14–201 (EIVAGVDEAG…KGNINHSAIL (188 aa)) form the RNase H type-2 domain. The a divalent metal cation site is built by Asp20, Glu21, and Asp111.

The protein belongs to the RNase HII family. The cofactor is Mn(2+). It depends on Mg(2+) as a cofactor.

It localises to the cytoplasm. The catalysed reaction is Endonucleolytic cleavage to 5'-phosphomonoester.. In terms of biological role, endonuclease that specifically degrades the RNA of RNA-DNA hybrids. The chain is Ribonuclease HII from Orientia tsutsugamushi (strain Boryong) (Rickettsia tsutsugamushi).